The sequence spans 243 residues: ATP-dependent dethiobiotin synthetase BioD (243 aa).

Position 12–17 (D12–F17) interacts with ATP. Position 16 (T16) interacts with Mg(2+). K37 is an active-site residue. A substrate-binding site is contributed by S41. ATP is bound by residues D54, E115 to G118, and N179 to M180. Residues D54 and E115 each contribute to the Mg(2+) site.

The protein belongs to the dethiobiotin synthetase family. Homodimer. Requires Mg(2+) as cofactor.

The protein resides in the cytoplasm. It catalyses the reaction (7R,8S)-7,8-diammoniononanoate + CO2 + ATP = (4R,5S)-dethiobiotin + ADP + phosphate + 3 H(+). The protein operates within cofactor biosynthesis; biotin biosynthesis; biotin from 7,8-diaminononanoate: step 1/2. Functionally, catalyzes a mechanistically unusual reaction, the ATP-dependent insertion of CO2 between the N7 and N8 nitrogen atoms of 7,8-diaminopelargonic acid (DAPA, also called 7,8-diammoniononanoate) to form a ureido ring. The protein is ATP-dependent dethiobiotin synthetase BioD of Caldicellulosiruptor bescii (strain ATCC BAA-1888 / DSM 6725 / KCTC 15123 / Z-1320) (Anaerocellum thermophilum).